The chain runs to 541 residues: T-complex protein 1 subunit epsilon (541 aa).

Alanine 2 bears the N-acetylalanine mark. Lysine 20 participates in a covalent cross-link: Glycyl lysine isopeptide (Lys-Gly) (interchain with G-Cter in SUMO2). At serine 26 the chain carries Phosphoserine. ADP is bound at residue glycine 53. Residue glycine 53 participates in ATP binding. Aspartate 104 contributes to the Mg(2+) binding site. ADP contacts are provided by glycine 105, threonine 106, threonine 107, and serine 175. ATP contacts are provided by threonine 106 and threonine 107. Residues lysine 210, lysine 214, lysine 265, lysine 275, and lysine 279 each participate in a glycyl lysine isopeptide (Lys-Gly) (interchain with G-Cter in SUMO2) cross-link. Serine 346 is modified (phosphoserine). Residue lysine 392 forms a Glycyl lysine isopeptide (Lys-Gly) (interchain with G-Cter in SUMO2) linkage. ADP-binding residues include glycine 422, aspartate 492, glutamate 508, and lysine 513. Residue glycine 422 coordinates ATP. Serine 539 carries the phosphoserine modification.

The protein belongs to the TCP-1 chaperonin family. Component of the chaperonin-containing T-complex (TRiC), a hexadecamer composed of two identical back-to-back stacked rings enclosing a protein folding chamber. Each ring is made up of eight different subunits: TCP1/CCT1, CCT2, CCT3, CCT4, CCT5, CCT6A/CCT6, CCT7, CCT8. Interacts with PACRG. Interacts with DNAAF4. Interacts with DLEC1. Interacts with SPMAP2. Ubiquitinated by the DCX(DCAF12) complex specifically recognizes the diglutamate (Glu-Glu) at the C-terminus, leading to its degradation.

Its subcellular location is the cytoplasm. It localises to the cytoskeleton. The protein resides in the microtubule organizing center. It is found in the centrosome. The catalysed reaction is ATP + H2O = ADP + phosphate + H(+). Component of the chaperonin-containing T-complex (TRiC), a molecular chaperone complex that assists the folding of actin, tubulin and other proteins upon ATP hydrolysis. The TRiC complex mediates the folding of WRAP53/TCAB1, thereby regulating telomere maintenance. As part of the TRiC complex may play a role in the assembly of BBSome, a complex involved in ciliogenesis regulating transports vesicles to the cilia. In Rattus norvegicus (Rat), this protein is T-complex protein 1 subunit epsilon (Cct5).